The sequence spans 575 residues: SH2B adapter protein 3 (575 aa).

Disordered stretches follow at residues 1 to 23, 83 to 136, and 150 to 176; these read MNGP…AAAP, RAPG…CSFQ, and SAGE…PARP. Phosphoserine is present on Ser-13. Basic and acidic residues predominate over residues 83 to 93; sequence RAPGRDYRDTG. Over residues 95 to 104 the composition is skewed to low complexity; that stretch reads GPPAKAEASP. Ser-103, Ser-120, and Ser-150 each carry phosphoserine. Residues 152 to 174 are compositionally biased toward low complexity; sequence GELPAAHTAAAPGTPGEAAETPA. The 114-residue stretch at 194–307 folds into the PH domain; sequence EALKEAVLRY…WMAELSECTG (114 aa). The segment at 322 to 346 is disordered; it reads ALEPSTSSSPRGSTDSLNQGASPGG. A compositionally biased stretch (low complexity) spans 325–337; it reads PSTSSSPRGSTDS. Ser-330 is modified (phosphoserine). The 99-residue stretch at 364–462 folds into the SH2 domain; sequence WFHGPISRVK…ACDVRLSSYV (99 aa). 2 disordered regions span residues 503–525 and 546–575; these read SSGC…PEQI and PVNR…YTPL.

It belongs to the SH2B adapter family. As to quaternary structure, binds to the tyrosine-phosphorylated TCR zeta chain via its SH2 domain. In terms of processing, tyrosine phosphorylated by LCK. As to expression, preferentially expressed by lymphoid cell lines.

Its function is as follows. Links T-cell receptor activation signal to phospholipase C-gamma-1, GRB2 and phosphatidylinositol 3-kinase. This chain is SH2B adapter protein 3 (SH2B3), found in Homo sapiens (Human).